The following is a 351-amino-acid chain: Putative glycosyltransferase 45 (351 aa).

The protein belongs to the glycosyltransferase group 1 family.

The protein is Putative glycosyltransferase 45 (SIFV0045) of Sulfolobus islandicus filamentous virus (isolate Iceland/Hveragerdi) (SIFV).